A 516-amino-acid polypeptide reads, in one-letter code: RNA-binding region-containing protein 3 (516 aa).

4 disordered regions span residues 1–27 (MAAP…RGDR), 106–130 (VHSP…DDKE), 210–254 (EDYM…DEDR), and 264–283 (ANLQ…RKKR). S21 is subject to Phosphoserine. The RRM 1 domain occupies 27–102 (RTLLVRHLPA…HTLVVEFAKE (76 aa)). Residue S108 is modified to Phosphoserine. Basic and acidic residues predominate over residues 115–130 (TEKKKRSDDPVEDDKE). Over residues 217-230 (APLPPTSPQPPEEP) the composition is skewed to pro residues. A compositionally biased stretch (basic residues) spans 269–283 (KRPKPIKQRHVRKKR). Residues 419–502 (CRIYVKNLAK…KPMVVQFARS (84 aa)) enclose the RRM 2 domain.

Component of the U11/U12 snRNPs that are part of the U12-type spliceosome. Found in a complex with m(7)G-capped U12 snRNA. Interacts with PDCD7.

It localises to the nucleus. In terms of biological role, participates in pre-mRNA U12-dependent splicing, performed by the minor spliceosome which removes U12-type introns. U12-type introns comprises less than 1% of all non-coding sequences. Binds to the 3'-stem-loop of m(7)G-capped U12 snRNA. The polypeptide is RNA-binding region-containing protein 3 (RNPC3) (Bos taurus (Bovine)).